We begin with the raw amino-acid sequence, 557 residues long: DNA 3'-5' helicase XPB (557 aa).

Residues 1–135 (MTDGPLIVQS…APLLGTRIAP (135 aa)) are required for protein stability or solubility. One can recognise a Helicase ATP-binding domain in the interval 190–344 (VDNFWNGGSG…DVFSLIGPKR (155 aa)). 203-210 (LPCGAGKT) contacts ATP. Positions 298-301 (DEVH) match the DEAH box motif. The region spanning 398–544 (RVVEKLVAQH…AYRIVDADDI (147 aa)) is the Helicase C-terminal domain.

The protein belongs to the helicase family. RAD25/XPB subfamily. As to quaternary structure, monomer. The cofactor is Mn(2+). It depends on Mg(2+) as a cofactor. Ca(2+) serves as cofactor.

The catalysed reaction is Couples ATP hydrolysis with the unwinding of duplex DNA by translocating in the 3'-5' direction.. The enzyme catalyses ATP + H2O = ADP + phosphate + H(+). Functionally, ATP-dependent 3'-5' DNA helicase, unwinds 3'-overhangs, 3'- flaps, and splayed-arm DNA substrates but not 5'-overhangs or 5'-flap substrates. Requires ATP hydrolysis for activity; the ATPase activity is DNA-dependent and requires a minimum of 4 single-stranded nucleotides (nt) with 6-10 nt providing all necessary interactions for full processive unwinding. The ATPase prefers ATP over CTP or GTP, is almost inactive with TTP. The sequence is that of DNA 3'-5' helicase XPB from Kineococcus radiotolerans (strain ATCC BAA-149 / DSM 14245 / SRS30216).